We begin with the raw amino-acid sequence, 689 residues long: Transcription factor MYC2 (689 aa).

A JAZ-interaction domain region spans residues 94-172; it reads LQQRLQALID…VLRELNSLIS (79 aa). A compositionally biased stretch (polar residues) spans 316-349; it reads NTVQTNSVPSSNSNKQIAYGNENNHPSGNGQSCY. Disordered stretches follow at residues 316–361 and 420–519; these read NTVQ…PQQQ and QSQF…EAER. Over residues 350–361 the composition is skewed to low complexity; it reads NQQQQKNPPQQQ. The span at 471-495 shows a compositional bias: basic and acidic residues; that stretch reads DSEHSDLEASVVKEADSSRVVEPEK. Residues 496–505 are compositionally biased toward basic residues; it reads RPRKRGRKPA. Basic and acidic residues predominate over residues 506 to 519; it reads NGREEPLNHVEAER. A basic motif; degenerate region spans residues 509–522; it reads EEPLNHVEAERQRR. The bHLH domain maps to 509–558; that stretch reads EEPLNHVEAERQRREKLNQRFYALRAVVPNVSKMDKASLLGDAISYINEL. Residues 523-558 are helix-loop-helix motif; that stretch reads EKLNQRFYALRAVVPNVSKMDKASLLGDAISYINEL. The interval 563–602 is disordered; sequence QNTESDKEDLKSQIEDLKKESRRPGPPPPPNQDLKMSSHT. The span at 566 to 585 shows a compositional bias: basic and acidic residues; sequence ESDKEDLKSQIEDLKKESRR.

Interacts (via N-terminus) with MED25. Interacts (via N-terminus) with JAZ7. MED25 and JAZ7 compete with each other to bind to MYC2. Interacts (via N-terminus) with MTB1. MTB1 and MED25 compete with each other to bind to MYC2. As to expression, expressed at low levels in roots, stems, leaves, flowers and fruits.

It is found in the nucleus. In terms of biological role, transcriptional activator that binds to the G-box motif (5'-AACGTG-3') found in the promoter of the jasmonate-induced gene LAPA1. Acts as a negative regulator of blue light-mediated photomorphogenesis and positively regulates root growth. Promotes growth in response to the phytohormones abscisic acid (ABA) and jasmonate (JA). Binds to the G-box motif (5'-CACGTG-3') of the RBCS-3A gene promoter. Acts downstream of the jasmonate (JA) receptor to orchestrate JA-mediated activation of plant responses. Positively regulates both wound-responsive and pathogen-responsive genes through MYC2-targeted transcription factors (MTFs) involved in early response to JA. With JA2L forms a transcription module that regulates wounding-responsive genes. With ERF.C3 forms a transcription module that regulates pathogen-responsive genes. Plays a critical role in orchestrating JA-mediated defense gene expression during Botrytis cinerea infection. Negatively regulates defense responses to root-knot nematodes, potentially by mediating crosstalk among the hormones strigolactones, abscisic acid (ABA) and jasmonate (JA). Regulates the termination of JA-mediated defense responses by specifically binding the G-box (5'-CACATG-3') motifs in the promoters of MTB1, MTB2 and MTB3, which are transcription factors that negatively regulates JA signaling. May be involved in JA-induced chilling tolerance, possibly by ameliorating the antioxidant enzyme system of fruit and increasing proline and lycopene levels. The chain is Transcription factor MYC2 from Solanum lycopersicum (Tomato).